The following is a 249-amino-acid chain: Mannose-binding protein C (249 aa).

The N-terminal stretch at 1–20 is a signal peptide; the sequence is MSLFTSLPFLLLTAVTASCA. The Collagen-like domain occupies 43–101; the sequence is GINGIPGKDGRDGAKGEKGEPGQGLRGSQGPPGKMGPQGTPGIPGIPGPIGQKGDPGEN. Residues 43–103 form a disordered region; the sequence is GINGIPGKDG…QKGDPGENMG (61 aa). Pro-48 is subject to 4-hydroxyproline. Residues 50–62 show a composition bias toward basic and acidic residues; that stretch reads KDGRDGAKGEKGE. A 4-hydroxyproline mark is found at Pro-63, Pro-74, Pro-83, and Pro-86. The segment covering 79-95 has biased composition (low complexity); the sequence is PQGTPGIPGIPGPIGQK. Residues 113 to 131 adopt a coiled-coil conformation; the sequence is RATLQSELNQIKNWLIFSL. Residues 135-246 form the C-type lectin domain; the sequence is VGKKAFFTNG…CSASFLTVCE (112 aa). Intrachain disulfides connect Cys-156/Cys-245 and Cys-223/Cys-237.

As to quaternary structure, oligomeric complex of 3 or more homotrimers. Interacts with MASP1 and MASP2. Interacts with MEP1A and MEP1B and may inhibit their catalytic activity. Hydroxylation on proline residues within the sequence motif, GXPG, is most likely to be 4-hydroxy as this fits the requirement for 4-hydroxylation in vertebrates.

The protein localises to the secreted. Its function is as follows. Calcium-dependent lectin involved in innate immune defense. Binds mannose, fucose and N-acetylglucosamine on different microorganisms and activates the lectin complement pathway. Binds to late apoptotic cells, as well as to apoptotic blebs and to necrotic cells, but not to early apoptotic cells, facilitating their uptake by macrophages. The sequence is that of Mannose-binding protein C (MBL) from Bos taurus (Bovine).